Consider the following 233-residue polypeptide: Large ribosomal subunit protein uL3 (233 aa).

It belongs to the universal ribosomal protein uL3 family. In terms of assembly, part of the 50S ribosomal subunit. Forms a cluster with proteins L14 and L19.

In terms of biological role, one of the primary rRNA binding proteins, it binds directly near the 3'-end of the 23S rRNA, where it nucleates assembly of the 50S subunit. This chain is Large ribosomal subunit protein uL3, found in Ureaplasma urealyticum serovar 10 (strain ATCC 33699 / Western).